The primary structure comprises 423 residues: Histidine--tRNA ligase (423 aa).

It belongs to the class-II aminoacyl-tRNA synthetase family. As to quaternary structure, homodimer.

The protein resides in the cytoplasm. The catalysed reaction is tRNA(His) + L-histidine + ATP = L-histidyl-tRNA(His) + AMP + diphosphate + H(+). This is Histidine--tRNA ligase from Phytoplasma mali (strain AT).